A 150-amino-acid polypeptide reads, in one-letter code: Photosystem I reaction center subunit XI (150 aa).

Residues 1 to 72 lie on the Stromal side of the membrane; the sequence is MSDFIQSYNN…DKLGPLRNTD (72 aa). The helical transmembrane segment at 73–93 threads the bilayer; that stretch reads VALLSGFLSAVGLIIILTVCL. Over 94 to 118 the chain is Lumenal; sequence SMYGNVSFDKDDAKDLLQTTEGWGQ. A helical transmembrane segment spans residues 119 to 139; the sequence is FTAGFLVGAVGGSGFAYLLLA. Topologically, residues 140–150 are stromal; the sequence is NIPVLQNLGLS.

The protein belongs to the PsaL family.

The protein localises to the plastid. It localises to the chloroplast thylakoid membrane. In Gracilaria tenuistipitata var. liui (Red alga), this protein is Photosystem I reaction center subunit XI.